A 202-amino-acid chain; its full sequence is ER membrane protein complex subunit 7 homolog (202 aa).

The signal sequence occupies residues 1 to 23; the sequence is MAPIFRSTSLIAFSLFFFFFAST. The chain crosses the membrane as a helical span at residues 148–168; it reads IVKSPMGLMVGFMVVVVFLMP. The tract at residues 179–202 is disordered; that stretch reads MKSAQEQMRSQGVPSLTSLLPASR. Positions 182 to 202 are enriched in polar residues; sequence AQEQMRSQGVPSLTSLLPASR.

The protein belongs to the EMC7 family.

Its subcellular location is the membrane. This is ER membrane protein complex subunit 7 homolog from Arabidopsis thaliana (Mouse-ear cress).